A 388-amino-acid polypeptide reads, in one-letter code: tRNA(Ile)-lysidine synthase (388 aa).

ATP is bound at residue 51 to 56; it reads SGGRDS.

It belongs to the tRNA(Ile)-lysidine synthase family.

It is found in the cytoplasm. The enzyme catalyses cytidine(34) in tRNA(Ile2) + L-lysine + ATP = lysidine(34) in tRNA(Ile2) + AMP + diphosphate + H(+). Functionally, ligates lysine onto the cytidine present at position 34 of the AUA codon-specific tRNA(Ile) that contains the anticodon CAU, in an ATP-dependent manner. Cytidine is converted to lysidine, thus changing the amino acid specificity of the tRNA from methionine to isoleucine. This chain is tRNA(Ile)-lysidine synthase, found in Bifidobacterium longum (strain NCC 2705).